The primary structure comprises 200 residues: Imidazoleglycerol-phosphate dehydratase (200 aa).

It belongs to the imidazoleglycerol-phosphate dehydratase family.

Its subcellular location is the cytoplasm. The catalysed reaction is D-erythro-1-(imidazol-4-yl)glycerol 3-phosphate = 3-(imidazol-4-yl)-2-oxopropyl phosphate + H2O. Its pathway is amino-acid biosynthesis; L-histidine biosynthesis; L-histidine from 5-phospho-alpha-D-ribose 1-diphosphate: step 6/9. This Bifidobacterium animalis subsp. lactis (strain AD011) protein is Imidazoleglycerol-phosphate dehydratase.